The chain runs to 193 residues: Acyl carrier protein phosphodiesterase (193 aa).

It belongs to the AcpH family.

It catalyses the reaction holo-[ACP] + H2O = apo-[ACP] + (R)-4'-phosphopantetheine + H(+). Functionally, converts holo-ACP to apo-ACP by hydrolytic cleavage of the phosphopantetheine prosthetic group from ACP. The polypeptide is Acyl carrier protein phosphodiesterase (Serratia proteamaculans (strain 568)).